The primary structure comprises 190 residues: Threonylcarbamoyl-AMP synthase (190 aa).

The YrdC-like domain occupies 7 to 190 (TGSIAAAVDL…ALTGELFRQG (184 aa)).

This sequence belongs to the SUA5 family. TsaC subfamily.

Its subcellular location is the cytoplasm. The catalysed reaction is L-threonine + hydrogencarbonate + ATP = L-threonylcarbamoyladenylate + diphosphate + H2O. Functionally, required for the formation of a threonylcarbamoyl group on adenosine at position 37 (t(6)A37) in tRNAs that read codons beginning with adenine. Catalyzes the conversion of L-threonine, HCO(3)(-)/CO(2) and ATP to give threonylcarbamoyl-AMP (TC-AMP) as the acyladenylate intermediate, with the release of diphosphate. This Salmonella arizonae (strain ATCC BAA-731 / CDC346-86 / RSK2980) protein is Threonylcarbamoyl-AMP synthase.